The primary structure comprises 398 residues: Dual-specificity RNA methyltransferase RlmN (398 aa).

E100 (proton acceptor) is an active-site residue. Positions 106 to 345 constitute a Radical SAM core domain; the sequence is DGDRGTLCVS…TTVRTTRGDD (240 aa). C113 and C350 form a disulfide bridge. Residues C120, C124, and C127 each coordinate [4Fe-4S] cluster. S-adenosyl-L-methionine-binding positions include 174-175, S206, 228-230, and N307; these read GE and SLH. The S-methylcysteine intermediate role is filled by C350.

It belongs to the radical SAM superfamily. RlmN family. The cofactor is [4Fe-4S] cluster.

It localises to the cytoplasm. The catalysed reaction is adenosine(2503) in 23S rRNA + 2 reduced [2Fe-2S]-[ferredoxin] + 2 S-adenosyl-L-methionine = 2-methyladenosine(2503) in 23S rRNA + 5'-deoxyadenosine + L-methionine + 2 oxidized [2Fe-2S]-[ferredoxin] + S-adenosyl-L-homocysteine. It catalyses the reaction adenosine(37) in tRNA + 2 reduced [2Fe-2S]-[ferredoxin] + 2 S-adenosyl-L-methionine = 2-methyladenosine(37) in tRNA + 5'-deoxyadenosine + L-methionine + 2 oxidized [2Fe-2S]-[ferredoxin] + S-adenosyl-L-homocysteine. Its function is as follows. Specifically methylates position 2 of adenine 2503 in 23S rRNA and position 2 of adenine 37 in tRNAs. m2A2503 modification seems to play a crucial role in the proofreading step occurring at the peptidyl transferase center and thus would serve to optimize ribosomal fidelity. In Saccharophagus degradans (strain 2-40 / ATCC 43961 / DSM 17024), this protein is Dual-specificity RNA methyltransferase RlmN.